The chain runs to 277 residues: MAVKGFKPTTPSRRHMTVNTFEEITTDIPEKSLLVALKRSGGRNAHGKITVRHIGGGAKRKYRIIDFKRNKDGIPAKVSTIEYDPNRSAFIALVTYADGEKRYIIAPVGLKVGDVIVSGADSDIKVGNCLPIVNIPVGTTIHNIELQAGKGAQLVRSAGTSAQLMAKEGKYATLRLPSGEVRYVRIECRATIGTVSNLTHEIINIGKAGRKRHMGIRPTVRGSVMNPNDHPHGGGEGKSPVGHPGPLTPWGKPALGLKTRKNKKYSDKFIIKRKNKK.

The disordered stretch occupies residues 222 to 277; sequence GSVMNPNDHPHGGGEGKSPVGHPGPLTPWGKPALGLKTRKNKKYSDKFIIKRKNKK.

It belongs to the universal ribosomal protein uL2 family. As to quaternary structure, part of the 50S ribosomal subunit. Forms a bridge to the 30S subunit in the 70S ribosome.

Its function is as follows. One of the primary rRNA binding proteins. Required for association of the 30S and 50S subunits to form the 70S ribosome, for tRNA binding and peptide bond formation. It has been suggested to have peptidyltransferase activity; this is somewhat controversial. Makes several contacts with the 16S rRNA in the 70S ribosome. In Clostridium kluyveri (strain NBRC 12016), this protein is Large ribosomal subunit protein uL2.